The chain runs to 353 residues: Rhodopsin (353 aa).

Over 1–36 the chain is Extracellular; sequence MNGTEGPFFYVPMVNTTGIVRSPYEYPQYYLVNPAA. N-linked (GlcNAc...) asparagine glycans are attached at residues Asn2 and Asn15. The helical transmembrane segment at 37-61 threads the bilayer; that stretch reads YAALGAYMFLLILVGFPINFLTLYV. Over 62 to 73 the chain is Cytoplasmic; that stretch reads TIEHKKLRTPLN. Residues 74–96 form a helical membrane-spanning segment; the sequence is YILLNLAVADLFMVLGGFTTTMY. Residues 97 to 110 lie on the Extracellular side of the membrane; the sequence is TSMHGYFVLGRLGC. A disulfide bond links Cys110 and Cys187. The chain crosses the membrane as a helical span at residues 111–133; it reads NIEGFFATLGGEIALWSLVVLAI. A 'Ionic lock' involved in activated form stabilization motif is present at residues 134–136; sequence ERW. At 134-152 the chain is on the cytoplasmic side; it reads ERWVVVCKPISNFRFGENH. A helical transmembrane segment spans residues 153 to 173; the sequence is AIMGLAFTWTMAMACAAPPLV. At 174–202 the chain is on the extracellular side; sequence GWSRYIPEGMQCSCGIDYYTRAEGFNNES. Asn200 carries N-linked (GlcNAc...) asparagine glycosylation. A helical transmembrane segment spans residues 203–224; the sequence is FVIYMFICHFTIPLTVVFFCYG. The Cytoplasmic portion of the chain corresponds to 225 to 252; it reads RLLCAVKEAAAAQQESETTQRAEKEVTR. A helical membrane pass occupies residues 253 to 274; the sequence is MVIMMVIAFLVCWLPYASVAWY. Over 275–286 the chain is Extracellular; the sequence is IFTHQGSEFGPV. The helical transmembrane segment at 287-308 threads the bilayer; it reads FMTIPAFFAKSSSIYNPMIYIC. N6-(retinylidene)lysine is present on Lys296. The Cytoplasmic segment spans residues 309 to 353; it reads LNKQFRHCMITTLCCGKNPFEEEEGASTASKTEASSVSSSSVSPA. 2 S-palmitoyl cysteine lipidation sites follow: Cys322 and Cys323. Positions 331-353 are disordered; that stretch reads EEGASTASKTEASSVSSSSVSPA. Residues 334 to 353 are compositionally biased toward low complexity; sequence ASTASKTEASSVSSSSVSPA.

The protein belongs to the G-protein coupled receptor 1 family. Opsin subfamily. Post-translationally, phosphorylated on some or all of the serine and threonine residues present in the C-terminal region. Contains one covalently linked retinal chromophore.

It is found in the membrane. It localises to the cell projection. The protein resides in the cilium. Its subcellular location is the photoreceptor outer segment. Functionally, photoreceptor required for image-forming vision at low light intensity. While most salt water fish species use retinal as chromophore, most freshwater fish use 3-dehydroretinal, or a mixture of retinal and 3-dehydroretinal. Light-induced isomerization of 11-cis to all-trans retinal triggers a conformational change that activates signaling via G-proteins. Subsequent receptor phosphorylation mediates displacement of the bound G-protein alpha subunit by arrestin and terminates signaling. In Diplodus annularis (Annular seabream), this protein is Rhodopsin (rho).